The chain runs to 66 residues: Conotoxin Cl14.1b (66 aa).

The first 19 residues, 1–19 (MNVTVMFLVLLLTMPLTDG), serve as a signal peptide directing secretion. Positions 20 to 47 (FNIRAINGGELFGLVQRDAGNALDHGFY) are excised as a propeptide.

It belongs to the conotoxin L superfamily. Contains 2 disulfide bonds. Expressed by the venom duct.

The protein resides in the secreted. The sequence is that of Conotoxin Cl14.1b from Californiconus californicus (California cone).